Reading from the N-terminus, the 396-residue chain is Acetate kinase (396 aa).

Position 8 (Asn-8) interacts with Mg(2+). Lys-15 serves as a coordination point for ATP. Arg-89 is a binding site for substrate. The active-site Proton donor/acceptor is Asp-146. ATP-binding positions include 206 to 210 (HIGNG), 283 to 285 (DMR), and 331 to 335 (GVGEN). Glu-383 is a binding site for Mg(2+).

Belongs to the acetokinase family. Homodimer. Mg(2+) is required as a cofactor. It depends on Mn(2+) as a cofactor.

It is found in the cytoplasm. It catalyses the reaction acetate + ATP = acetyl phosphate + ADP. Its pathway is metabolic intermediate biosynthesis; acetyl-CoA biosynthesis; acetyl-CoA from acetate: step 1/2. Functionally, catalyzes the formation of acetyl phosphate from acetate and ATP. Can also catalyze the reverse reaction. In Streptococcus pneumoniae serotype 2 (strain D39 / NCTC 7466), this protein is Acetate kinase.